We begin with the raw amino-acid sequence, 590 residues long: Cytosolic Fe-S cluster assembly factor nar1 (590 aa).

C20 lines the [4Fe-4S] cluster pocket. The segment at 25–50 (ESLPQKQSNENPYEVTTEDKVQPENP) is disordered. 5 residues coordinate [4Fe-4S] cluster: C60, C63, C66, C204, and C259. The disordered stretch occupies residues 423-446 (PGAKVATGQTAGGRRQPISRNGAS). [4Fe-4S] cluster-binding residues include C461 and C465.

It belongs to the NARF family.

Component of the cytosolic Fe/S protein assembly machinery. Required for maturation of extramitochondrial Fe/S proteins. May play a role in the transfer of pre-assembled Fe/S clusters to target apoproteins. The sequence is that of Cytosolic Fe-S cluster assembly factor nar1 (nar1) from Emericella nidulans (strain FGSC A4 / ATCC 38163 / CBS 112.46 / NRRL 194 / M139) (Aspergillus nidulans).